A 60-amino-acid polypeptide reads, in one-letter code: Putative mercuric resistance protein (60 aa).

The polypeptide is Putative mercuric resistance protein (Pseudomonas aeruginosa).